Here is a 593-residue protein sequence, read N- to C-terminus: UvrABC system protein C (593 aa).

A GIY-YIG domain is found at 14–91 (DSPGCYLHKD…IQENMPKYNI (78 aa)). One can recognise a UVR domain in the interval 196–231 (NKIVNGLTEKMKSAAMTMEFERAAEYRDLIEAISLL).

Belongs to the UvrC family. Interacts with UvrB in an incision complex.

The protein localises to the cytoplasm. In terms of biological role, the UvrABC repair system catalyzes the recognition and processing of DNA lesions. UvrC both incises the 5' and 3' sides of the lesion. The N-terminal half is responsible for the 3' incision and the C-terminal half is responsible for the 5' incision. This chain is UvrABC system protein C, found in Streptococcus agalactiae serotype V (strain ATCC BAA-611 / 2603 V/R).